A 103-amino-acid chain; its full sequence is Large ribosomal subunit protein eL14 (103 aa).

It belongs to the eukaryotic ribosomal protein eL14 family.

This is Large ribosomal subunit protein eL14 from Pyrobaculum aerophilum (strain ATCC 51768 / DSM 7523 / JCM 9630 / CIP 104966 / NBRC 100827 / IM2).